The following is a 387-amino-acid chain: Succinate--CoA ligase [ADP-forming] subunit beta (387 aa).

Positions 9 to 236 (KELFAKHNVP…RAATDPLELK (228 aa)) constitute an ATP-grasp domain. Residues K45, 52–54 (GRG), S94, and E99 each bind ATP. Mg(2+) is bound by residues N191 and D205. Substrate contacts are provided by residues N256 and 318 to 320 (GIT).

It belongs to the succinate/malate CoA ligase beta subunit family. Heterotetramer of two alpha and two beta subunits. The cofactor is Mg(2+).

It carries out the reaction succinate + ATP + CoA = succinyl-CoA + ADP + phosphate. The enzyme catalyses GTP + succinate + CoA = succinyl-CoA + GDP + phosphate. It participates in carbohydrate metabolism; tricarboxylic acid cycle; succinate from succinyl-CoA (ligase route): step 1/1. Succinyl-CoA synthetase functions in the citric acid cycle (TCA), coupling the hydrolysis of succinyl-CoA to the synthesis of either ATP or GTP and thus represents the only step of substrate-level phosphorylation in the TCA. The beta subunit provides nucleotide specificity of the enzyme and binds the substrate succinate, while the binding sites for coenzyme A and phosphate are found in the alpha subunit. The polypeptide is Succinate--CoA ligase [ADP-forming] subunit beta (Mycobacterium bovis (strain ATCC BAA-935 / AF2122/97)).